A 352-amino-acid polypeptide reads, in one-letter code: MTSVDTPTPHGGTPAPAPATANGRKLLRIEARNAQTPIERKPKWIRTRATMGPEYSELKGLVKREGLHTVCEEAGCPNIFECWEDREATFLIGGEQCTRRCDFCQIDTGKPAALDRDEPRRVAESVQAMGLRYSTITGVARDDLEDGGAWLYAETVRAIKRLNPATGVELLIPDFNADPDQLAEVFSARPEVLAHNLETVPRIFKRIRPAFRYERSLSVLTAAREAGLVTKSNLILGMGETPEEVTEAMRDLHEAGCDILTITQYLRPSPRHHPVDRWVKPEEFVEHSRVAEEIGFAGVMAGPLVRSSYRAGRLYAQAMAHHGREIPPAMAHLAEEGTASQEASAVLARFGS.

The tract at residues 1–21 (MTSVDTPTPHGGTPAPAPATA) is disordered. [4Fe-4S] cluster-binding residues include C71, C76, C82, C97, C101, C104, and S308. A Radical SAM core domain is found at 83–297 (WEDREATFLI…SRVAEEIGFA (215 aa)).

It belongs to the radical SAM superfamily. Lipoyl synthase family. [4Fe-4S] cluster serves as cofactor.

It is found in the cytoplasm. It carries out the reaction [[Fe-S] cluster scaffold protein carrying a second [4Fe-4S](2+) cluster] + N(6)-octanoyl-L-lysyl-[protein] + 2 oxidized [2Fe-2S]-[ferredoxin] + 2 S-adenosyl-L-methionine + 4 H(+) = [[Fe-S] cluster scaffold protein] + N(6)-[(R)-dihydrolipoyl]-L-lysyl-[protein] + 4 Fe(3+) + 2 hydrogen sulfide + 2 5'-deoxyadenosine + 2 L-methionine + 2 reduced [2Fe-2S]-[ferredoxin]. The protein operates within protein modification; protein lipoylation via endogenous pathway; protein N(6)-(lipoyl)lysine from octanoyl-[acyl-carrier-protein]: step 2/2. Its function is as follows. Catalyzes the radical-mediated insertion of two sulfur atoms into the C-6 and C-8 positions of the octanoyl moiety bound to the lipoyl domains of lipoate-dependent enzymes, thereby converting the octanoylated domains into lipoylated derivatives. This is Lipoyl synthase from Nocardia farcinica (strain IFM 10152).